The primary structure comprises 88 residues: UPF0297 protein BLi02868/BL02032 (88 aa).

It belongs to the UPF0297 family.

This Bacillus licheniformis (strain ATCC 14580 / DSM 13 / JCM 2505 / CCUG 7422 / NBRC 12200 / NCIMB 9375 / NCTC 10341 / NRRL NRS-1264 / Gibson 46) protein is UPF0297 protein BLi02868/BL02032.